The sequence spans 495 residues: Pre-glycoprotein polyprotein GP complex (495 aa).

Glycine 2 carries N-myristoyl glycine; by host lipidation. Over 2–17 (GQFISFMQEIPIFLQE) the chain is Extracellular. The helical transmembrane segment at 18–33 (ALNIALVAVSLICIVK) threads the bilayer. Residues 34–58 (GLVNLYRCGLFQLMVFLVLAGRSCS) are Cytoplasmic-facing. Residue cysteine 57 coordinates Zn(2+). Residues 59-434 (EETFKIGMHT…QGRTPITLVD (376 aa)) lie on the Extracellular side of the membrane. 4 cysteine pairs are disulfide-bonded: cysteine 92/cysteine 236, cysteine 281/cysteine 294, cysteine 303/cysteine 312, and cysteine 366/cysteine 387. Residues asparagine 95 and asparagine 188 are each glycosylated (N-linked (GlcNAc...) asparagine; by host). N-linked (GlcNAc...) asparagine; by host glycans are attached at residues asparagine 367, asparagine 375, asparagine 392, and asparagine 397. A helical transmembrane segment spans residues 435–455 (ICFWSTVFFTSTLFLHLIGFP). Topologically, residues 456–495 (THEHIRGEGCPLPHRLNSMGGCRCGKYLPLKKPTIWHRRH) are cytoplasmic. Positions 457, 459, 465, 469, 477, 479, and 495 each coordinate Zn(2+).

This sequence belongs to the arenaviridae GPC protein family. In terms of assembly, interacts with glycoprotein G2. Part of the GP complex (GP-C) together with glycoprotein G1 and glycoprotein G2. The GP-complex interacts with protein Z, which interacts with ribonucleocapsid; these interactions may induce virion budding. Homotrimer; disulfide-linked. In pre-fusion state, G1 homotrimers bind G2 homotrimers via ionic interactions. Part of the GP complex (GP-C) together with glycoprotein G2 and the stable signal peptide. The GP-complex interacts with protein Z, which interacts with ribonucleocapsid; these interactions may induce virion budding. As to quaternary structure, homotrimer. Interacts with the stable signal peptide. In pre-fusion state, G2 homotrimers bind G1 homotrimers via ionic interactions. Part of the GP complex (GP-C) together with glycoprotein G1 and the stable signal peptide. Acidification in the endosome triggers rearrangements, which ultimately leads to a 6 helix bundle formed by the two heptad repeat domains (HR1 and HR2) in post-fusion state. The GP-complex interacts with protein Z, which interacts with ribonucleocapsid; these interactions may induce virion budding. Post-translationally, specific enzymatic cleavages in vivo yield mature proteins. GP-C polyprotein is cleaved in the endoplasmic reticulum by the host protease MBTPS1. Only cleaved glycoprotein is incorporated into virions. The SSP remains stably associated with the GP complex following cleavage by signal peptidase and plays crucial roles in the trafficking of GP through the secretory pathway. In terms of processing, myristoylation is necessary for GP2-mediated fusion activity.

Its subcellular location is the virion membrane. The protein localises to the host endoplasmic reticulum membrane. It is found in the host Golgi apparatus membrane. The protein resides in the host cell membrane. Functions as a cleaved signal peptide that is retained as the third component of the GP complex (GP-C). Helps to stabilize the spike complex in its native conformation. The SSP is required for efficient glycoprotein expression, post-translational maturation cleavage of G1 and G2, glycoprotein transport to the cell surface plasma membrane, formation of infectious virus particles, and acid pH-dependent glycoprotein-mediated cell fusion. In terms of biological role, forms the virion spikes together with glycoprotein G2. The glycoprotein spike trimers are connected to the underlying matrix. Interacts with the host receptor leading to virus endocytosis. Functionally, forms the virion spikes together with glycoprotein G1. The glycoprotein spike trimers are connected to the underlying matrix. Class I viral fusion protein that directs fusion of viral and host endosomal membranes, leading to delivery of the nucleocapsid into the cytoplasm. Membrane fusion is mediated by irreversible conformational changes induced by acidification. In Tacaribe virus (strain Franze-Fernandez) (TCRV), this protein is Pre-glycoprotein polyprotein GP complex.